Here is a 1205-residue protein sequence, read N- to C-terminus: ATP-dependent DNA helicase MER3 homolog (1205 aa).

The region spanning 41–236 (PACFLSDVNM…WLAVPSEGIK (196 aa)) is the Helicase ATP-binding domain. Residue 54-61 (APTGSGKT) participates in ATP binding. The DEAH box motif lies at 172–175 (DEVH). Residues 266–467 (RLQSFIFDIL…CAVEHLNAEI (202 aa)) enclose the Helicase C-terminal domain. One can recognise an SEC63 domain in the interval 541-852 (PLEPGRLMTK…FEEYVGLDIH (312 aa)). Over residues 1075–1091 (QKSEILNRTQGKNSTQL) the composition is skewed to polar residues. The segment at 1075–1131 (QKSEILNRTQGKNSTQLAGKKAFEKSKTPDENSLHFVGKRDSSSEKSKALSKTPDEN) is disordered. Basic and acidic residues predominate over residues 1095-1122 (KAFEKSKTPDENSLHFVGKRDSSSEKSK).

The protein belongs to the helicase family. SKI2 subfamily. Transcribed preferentially in early stages of meiocyte development and during meiosis in young flowers.

It localises to the nucleus. Its subcellular location is the chromosome. The enzyme catalyses Couples ATP hydrolysis with the unwinding of duplex DNA by translocating in the 3'-5' direction.. The catalysed reaction is ATP + H2O = ADP + phosphate + H(+). Functionally, DNA helicase required for crossover formation, complete synapsis of homologous chromosomes and bivalent formation during meiosis. Is specific to recombination events resulting in interference-sensitive crossovers (class I meiotic crossover). Works cooperatively with ZIP4 to promote crossovers. The polypeptide is ATP-dependent DNA helicase MER3 homolog (Oryza sativa subsp. japonica (Rice)).